The sequence spans 409 residues: L-cysteine:1D-myo-inositol 2-amino-2-deoxy-alpha-D-glucopyranoside ligase (409 aa).

C43 lines the Zn(2+) pocket. L-cysteinyl-5'-AMP is bound by residues 43 to 46, T58, and 81 to 83; these read CGIT and NVT. A 'HIGH' region motif is present at residues 45 to 55; that stretch reads ITPYDATHMGH. Residues 183–188 carry the 'ERGGDP' region motif; the sequence is ERGGDP. W224 is a binding site for L-cysteinyl-5'-AMP. C228 contacts Zn(2+). 246 to 248 lines the L-cysteinyl-5'-AMP pocket; sequence GSD. Zn(2+) is bound at residue H253. Position 280 (V280) interacts with L-cysteinyl-5'-AMP. The 'KMSKS' region signature appears at 286 to 290; the sequence is KMSKS.

It belongs to the class-I aminoacyl-tRNA synthetase family. MshC subfamily. As to quaternary structure, monomer. Requires Zn(2+) as cofactor.

The enzyme catalyses 1D-myo-inositol 2-amino-2-deoxy-alpha-D-glucopyranoside + L-cysteine + ATP = 1D-myo-inositol 2-(L-cysteinylamino)-2-deoxy-alpha-D-glucopyranoside + AMP + diphosphate + H(+). Functionally, catalyzes the ATP-dependent condensation of GlcN-Ins and L-cysteine to form L-Cys-GlcN-Ins. The chain is L-cysteine:1D-myo-inositol 2-amino-2-deoxy-alpha-D-glucopyranoside ligase from Streptomyces scabiei (strain 87.22).